A 197-amino-acid polypeptide reads, in one-letter code: Holliday junction branch migration complex subunit RuvA (197 aa).

The tract at residues 1–64 (MIALLRGLVV…EDVLALYGFL (64 aa)) is domain I. The segment at 65–143 (TQDEKALFEK…AATGEEPGAP (79 aa)) is domain II. The segment at 144 to 153 (AAEALSPIDQ) is flexible linker. Positions 153–197 (QDVLSALLNLGCARPQAEAAVRKAKAAGASLDFEPLFRRALELVR) are domain III.

This sequence belongs to the RuvA family. In terms of assembly, homotetramer. Forms an RuvA(8)-RuvB(12)-Holliday junction (HJ) complex. HJ DNA is sandwiched between 2 RuvA tetramers; dsDNA enters through RuvA and exits via RuvB. An RuvB hexamer assembles on each DNA strand where it exits the tetramer. Each RuvB hexamer is contacted by two RuvA subunits (via domain III) on 2 adjacent RuvB subunits; this complex drives branch migration. In the full resolvosome a probable DNA-RuvA(4)-RuvB(12)-RuvC(2) complex forms which resolves the HJ.

The protein resides in the cytoplasm. In terms of biological role, the RuvA-RuvB-RuvC complex processes Holliday junction (HJ) DNA during genetic recombination and DNA repair, while the RuvA-RuvB complex plays an important role in the rescue of blocked DNA replication forks via replication fork reversal (RFR). RuvA specifically binds to HJ cruciform DNA, conferring on it an open structure. The RuvB hexamer acts as an ATP-dependent pump, pulling dsDNA into and through the RuvAB complex. HJ branch migration allows RuvC to scan DNA until it finds its consensus sequence, where it cleaves and resolves the cruciform DNA. The sequence is that of Holliday junction branch migration complex subunit RuvA from Solibacter usitatus (strain Ellin6076).